Consider the following 1029-residue polypeptide: Myosin phosphatase Rho-interacting protein (1029 aa).

The interaction with F-actin stretch occupies residues 1–387; sequence MSAAKENPCR…DRRSTESSMT (387 aa). Residues 43–150 enclose the PH 1 domain; sequence KPIYGGWLLL…WLEMLMVYPR (108 aa). Positions 152–267 are disordered; sequence NKQNQKKKRK…GDRVDGGRKV (116 aa). Over residues 179 to 195 the composition is skewed to low complexity; sequence SSSGGSSGSSSSSSSSS. Phosphoserine is present on residues S198, S224, S226, S230, and S232. A compositionally biased stretch (low complexity) spans 226–237; the sequence is SPVQSPSQSQPP. The span at 245–267 shows a compositional bias: basic and acidic residues; that stretch reads TGLDSKEDENILSGDRVDGGRKV. A phosphoserine mark is found at S271, S275, S294, and S297. Disordered regions lie at residues 279-306 and 333-383; these read AKQDLRAEEQLPPLLSPPSPSTPHSRRS and PSSD…RSTE. A Phosphothreonine modification is found at T300. Positions 338-354 are enriched in basic and acidic residues; the sequence is RQGRSERRAIPRKRDFA. Residue S369 is modified to Phosphoserine. Positions 391 to 487 constitute a PH 2 domain; that stretch reads LNFKKGWLTK…WIQTIMKHVL (97 aa). A disordered region spans residues 490–614; it reads SAPDVTSSLP…NDGPGMEDTA (125 aa). The span at 492–509 shows a compositional bias: polar residues; the sequence is PDVTSSLPEGKNKSTSFD. Position 497 is a phosphoserine (S497). Basic and acidic residues predominate over residues 527 to 550; sequence PEQKKSRARERRREGRSKTFDWAE. The interval 550 to 828 is interaction with RHOA; sequence EFRPIQQALA…SVQRELEVLS (279 aa). The segment covering 562-571 has biased composition (polar residues); sequence RASTVGSSDS. Residues 583–592 are compositionally biased toward basic and acidic residues; the sequence is ELERERARRR. Phosphoserine is present on S622. T650 is subject to Phosphothreonine. Residues 675 to 979 are a coiled coil; the sequence is STHELTSLLE…LKAATEALGE (305 aa). The residue at position 804 (S804) is a Phosphoserine. Residues 828–883 form an interaction with PPP1R12A region; sequence SEQYSQKCLENAHLAQALEAERQALRQCQRENQELNAHNQELNNRLAAEITRLRTL. Phosphoserine occurs at positions 981, 997, 1018, and 1020.

As to quaternary structure, binds RHOA, PPP1R12A/MBS and PPP1R12C/MBS85 through adjacent coiled coil domains. Interacts with MYZAP. Binds F-actin through its N-terminus.

Its subcellular location is the cytoplasm. The protein resides in the cytoskeleton. In terms of biological role, targets myosin phosphatase to the actin cytoskeleton. Required for the regulation of the actin cytoskeleton by RhoA and ROCK1. Depletion leads to an increased number of stress fibers in smooth muscle cells through stabilization of actin fibers by phosphorylated myosin. Overexpression of MRIP as well as its F-actin-binding region leads to disassembly of stress fibers in neuronal cells. The chain is Myosin phosphatase Rho-interacting protein (Mprip) from Rattus norvegicus (Rat).